The following is a 438-amino-acid chain: Nucleolar protein 12 (438 aa).

Disordered regions lie at residues 1-28 (MGETNSSLDNENTSFVGKLSSSSNVDPT) and 60-94 (ANGVEEAAETIESDTKEVQNIKPKSKKKKKKLNDS). Positions 60–71 (ANGVEEAAETIE) are enriched in acidic residues. Phosphoserine is present on residues Ser94 and Ser95. The interval 108 to 146 (AEEDEEKDKDSAGLINDEEDKSPAKQSVLEERTSQEDVK) is disordered. The segment covering 135–146 (VLEERTSQEDVK) has biased composition (basic and acidic residues). 2 consecutive RRM domains span residues 164–262 (KTVF…SVSH) and 270–348 (RCVF…RAKS). Basic residues-rich tracts occupy residues 346–357 (AKSTKPKSITRS) and 402–412 (AKKKVNKKRKE). Disordered regions lie at residues 346-366 (AKSTKPKSITRSKRGDEKTRT) and 390-438 (EGHR…KKDK).

This sequence belongs to the RRM RBM34 family.

The protein resides in the nucleus. The protein localises to the nucleolus. Its function is as follows. Involved in pre-25S rRNA processing. This Schizosaccharomyces pombe (strain 972 / ATCC 24843) (Fission yeast) protein is Nucleolar protein 12 (nop12).